The sequence spans 189 residues: Peptidyl-tRNA hydrolase (189 aa).

Residue Tyr14 coordinates tRNA. The Proton acceptor role is filled by His19. TRNA is bound by residues Phe64, Asn66, and Asn112.

It belongs to the PTH family. Monomer.

Its subcellular location is the cytoplasm. It catalyses the reaction an N-acyl-L-alpha-aminoacyl-tRNA + H2O = an N-acyl-L-amino acid + a tRNA + H(+). In terms of biological role, hydrolyzes ribosome-free peptidyl-tRNAs (with 1 or more amino acids incorporated), which drop off the ribosome during protein synthesis, or as a result of ribosome stalling. Catalyzes the release of premature peptidyl moieties from peptidyl-tRNA molecules trapped in stalled 50S ribosomal subunits, and thus maintains levels of free tRNAs and 50S ribosomes. The chain is Peptidyl-tRNA hydrolase from Sphingopyxis alaskensis (strain DSM 13593 / LMG 18877 / RB2256) (Sphingomonas alaskensis).